A 541-amino-acid chain; its full sequence is Chaperonin GroEL 2 (541 aa).

ATP is bound by residues 29–32, 86–90, Gly413, 477–479, and Asp493; these read TLGP, DGTTT, and NAA.

Belongs to the chaperonin (HSP60) family. In terms of assembly, forms a cylinder of 14 subunits composed of two heptameric rings stacked back-to-back. Interacts with the co-chaperonin GroES.

The protein resides in the cytoplasm. It carries out the reaction ATP + H2O + a folded polypeptide = ADP + phosphate + an unfolded polypeptide.. Its function is as follows. Together with its co-chaperonin GroES, plays an essential role in assisting protein folding. The GroEL-GroES system forms a nano-cage that allows encapsulation of the non-native substrate proteins and provides a physical environment optimized to promote and accelerate protein folding. This chain is Chaperonin GroEL 2, found in Nocardioides sp. (strain ATCC BAA-499 / JS614).